The primary structure comprises 444 residues: Tubulin beta-4A chain (444 aa).

The short motif at 1–4 (MREI) is the MREI motif element. Q11, E69, S138, G142, T143, and G144 together coordinate GTP. A Mg(2+)-binding site is contributed by E69. S172 is modified (phosphoserine; by CDK1). GTP contacts are provided by N204 and N226. E436 is subject to 5-glutamyl polyglutamate.

This sequence belongs to the tubulin family. In terms of assembly, dimer of alpha and beta chains. A typical microtubule is a hollow water-filled tube with an outer diameter of 25 nm and an inner diameter of 15 nM. Alpha-beta heterodimers associate head-to-tail to form protofilaments running lengthwise along the microtubule wall with the beta-tubulin subunit facing the microtubule plus end conferring a structural polarity. Microtubules usually have 13 protofilaments but different protofilament numbers can be found in some organisms and specialized cells. Requires Mg(2+) as cofactor. Post-translationally, some glutamate residues at the C-terminus are polyglycylated, resulting in polyglycine chains on the gamma-carboxyl group. Glycylation is mainly limited to tubulin incorporated into axonemes (cilia and flagella) whereas glutamylation is prevalent in neuronal cells, centrioles, axonemes, and the mitotic spindle. Both modifications can coexist on the same protein on adjacent residues, and lowering polyglycylation levels increases polyglutamylation, and reciprocally. Cilia and flagella glycylation is required for their stability and maintenance. Flagella glycylation controls sperm motility. Some glutamate residues at the C-terminus are polyglutamylated, resulting in polyglutamate chains on the gamma-carboxyl group. Polyglutamylation plays a key role in microtubule severing by spastin (SPAST). SPAST preferentially recognizes and acts on microtubules decorated with short polyglutamate tails: severing activity by SPAST increases as the number of glutamates per tubulin rises from one to eight, but decreases beyond this glutamylation threshold. Glutamylation is also involved in cilia motility. In terms of processing, phosphorylated on Ser-172 by CDK1 during the cell cycle, from metaphase to telophase, but not in interphase. This phosphorylation inhibits tubulin incorporation into microtubules.

It is found in the cytoplasm. The protein resides in the cytoskeleton. Its function is as follows. Tubulin is the major constituent of microtubules, a cylinder consisting of laterally associated linear protofilaments composed of alpha- and beta-tubulin heterodimers. Microtubules grow by the addition of GTP-tubulin dimers to the microtubule end, where a stabilizing cap forms. Below the cap, tubulin dimers are in GDP-bound state, owing to GTPase activity of alpha-tubulin. The protein is Tubulin beta-4A chain (TUBB4A) of Bos taurus (Bovine).